A 179-amino-acid chain; its full sequence is Serglycin (179 aa).

The first 26 residues, 1–26, serve as a signal peptide directing secretion; it reads MRQVPVGTRLVLALAFVLVWGSSVQG. The propeptide at 27 to 75 is activation peptide; the sequence is YPARRARYQWVRCKPDGIFANCIEEKGPRFDLIAEESNVGPPMTDPVLM. Residues Cys-39 and Cys-48 are joined by a disulfide bond. Residues 86 to 145 form a disordered region; the sequence is SDDYSGSGSGSGSGSGSGSGSGSGSGSGSGSGSGSGSGSGSGSGSGSGSGSGSLADMEWE. O-linked (Xyl...) (glycosaminoglycan) serine glycosylation is found at Ser-90 and Ser-92. 24 repeat units span residues 90–91, 92–93, 94–95, 96–97, 98–99, 100–101, 102–103, 104–105, 106–107, 108–109, 110–111, 112–113, 114–115, 116–117, 118–119, 120–121, 122–123, 124–125, 126–127, 128–129, 130–131, 132–133, 134–135, and 136–137. Residues 90–137 form a 24 X 2 AA tandem repeats of S-G region; the sequence is SGSGSGSGSGSGSGSGSGSGSGSGSGSGSGSGSGSGSGSGSGSGSGSG. Residues 92–136 are compositionally biased toward gly residues; it reads SGSGSGSGSGSGSGSGSGSGSGSGSGSGSGSGSGSGSGSGSGSGS. O-linked (Xyl...) (glycosaminoglycan) serine glycans are attached at residues Ser-96, Ser-98, Ser-100, Ser-102, Ser-104, and Ser-106.

It belongs to the serglycin family. As to quaternary structure, binds to activated CD44 and to GZMB. O-glycosylated; contains chondroitin sulfate and heparan sulfate.

It localises to the cytoplasmic granule. The protein resides in the cytolytic granule. Its subcellular location is the secreted. It is found in the extracellular space. The protein localises to the golgi apparatus. In terms of biological role, plays a role in formation of mast cell secretory granules and mediates storage of various compounds in secretory vesicles. Required for storage of some proteases in both connective tissue and mucosal mast cells and for storage of granzyme B in T-lymphocytes. Plays a role in localizing neutrophil elastase in azurophil granules of neutrophils. Mediates processing of MMP2. Plays a role in cytotoxic cell granule-mediated apoptosis by forming a complex with granzyme B which is delivered to cells by perforin to induce apoptosis. Regulates the secretion of TNF-alpha and may also regulate protease secretion. Inhibits bone mineralization. In Rattus norvegicus (Rat), this protein is Serglycin (Srgn).